We begin with the raw amino-acid sequence, 202 residues long: Recombination protein RecR (202 aa).

The C4-type zinc-finger motif lies at C61–C76. One can recognise a Toprim domain in the interval S84–P179.

It belongs to the RecR family.

Functionally, may play a role in DNA repair. It seems to be involved in an RecBC-independent recombinational process of DNA repair. It may act with RecF and RecO. The sequence is that of Recombination protein RecR from Bordetella avium (strain 197N).